The chain runs to 298 residues: ATP synthase gamma chain (298 aa).

It belongs to the ATPase gamma chain family. In terms of assembly, F-type ATPases have 2 components, CF(1) - the catalytic core - and CF(0) - the membrane proton channel. CF(1) has five subunits: alpha(3), beta(3), gamma(1), delta(1), epsilon(1). CF(0) has three main subunits: a, b and c.

Its subcellular location is the cell inner membrane. Produces ATP from ADP in the presence of a proton gradient across the membrane. The gamma chain is believed to be important in regulating ATPase activity and the flow of protons through the CF(0) complex. This is ATP synthase gamma chain from Desulfosudis oleivorans (strain DSM 6200 / JCM 39069 / Hxd3) (Desulfococcus oleovorans).